Consider the following 150-residue polypeptide: Arginine repressor (150 aa).

It belongs to the ArgR family.

The protein localises to the cytoplasm. It participates in amino-acid biosynthesis; L-arginine biosynthesis [regulation]. Functionally, regulates arginine biosynthesis genes. In Symbiobacterium thermophilum (strain DSM 24528 / JCM 14929 / IAM 14863 / T), this protein is Arginine repressor.